A 171-amino-acid polypeptide reads, in one-letter code: Peptidyl-prolyl cis-trans isomerase slr1251 (171 aa).

A PPIase cyclophilin-type domain is found at 6 to 169 (FFDITIGSDT…QAIVISDCGE (164 aa)).

It belongs to the cyclophilin-type PPIase family.

The catalysed reaction is [protein]-peptidylproline (omega=180) = [protein]-peptidylproline (omega=0). Its function is as follows. PPIases accelerate the folding of proteins. It catalyzes the cis-trans isomerization of proline imidic peptide bonds in oligopeptides. This chain is Peptidyl-prolyl cis-trans isomerase slr1251, found in Synechocystis sp. (strain ATCC 27184 / PCC 6803 / Kazusa).